Reading from the N-terminus, the 357-residue chain is Cobalt-precorrin-5B C(1)-methyltransferase (357 aa).

Belongs to the CbiD family.

The catalysed reaction is Co-precorrin-5B + S-adenosyl-L-methionine = Co-precorrin-6A + S-adenosyl-L-homocysteine. It functions in the pathway cofactor biosynthesis; adenosylcobalamin biosynthesis; cob(II)yrinate a,c-diamide from sirohydrochlorin (anaerobic route): step 6/10. Catalyzes the methylation of C-1 in cobalt-precorrin-5B to form cobalt-precorrin-6A. The polypeptide is Cobalt-precorrin-5B C(1)-methyltransferase (Alkaliphilus oremlandii (strain OhILAs) (Clostridium oremlandii (strain OhILAs))).